A 363-amino-acid polypeptide reads, in one-letter code: Phosphoserine aminotransferase (363 aa).

Ser-9 and Arg-42 together coordinate L-glutamate. Residues 76-77 (AR), Trp-102, Thr-154, Asp-174, and Gln-197 contribute to the pyridoxal 5'-phosphate site. Lys-198 carries the N6-(pyridoxal phosphate)lysine modification. 240 to 241 (NT) provides a ligand contact to pyridoxal 5'-phosphate.

The protein belongs to the class-V pyridoxal-phosphate-dependent aminotransferase family. SerC subfamily. As to quaternary structure, homodimer. Pyridoxal 5'-phosphate serves as cofactor.

The protein localises to the cytoplasm. The enzyme catalyses O-phospho-L-serine + 2-oxoglutarate = 3-phosphooxypyruvate + L-glutamate. The catalysed reaction is 4-(phosphooxy)-L-threonine + 2-oxoglutarate = (R)-3-hydroxy-2-oxo-4-phosphooxybutanoate + L-glutamate. It functions in the pathway amino-acid biosynthesis; L-serine biosynthesis; L-serine from 3-phospho-D-glycerate: step 2/3. The protein operates within cofactor biosynthesis; pyridoxine 5'-phosphate biosynthesis; pyridoxine 5'-phosphate from D-erythrose 4-phosphate: step 3/5. Catalyzes the reversible conversion of 3-phosphohydroxypyruvate to phosphoserine and of 3-hydroxy-2-oxo-4-phosphonooxybutanoate to phosphohydroxythreonine. This chain is Phosphoserine aminotransferase, found in Baumannia cicadellinicola subsp. Homalodisca coagulata.